The primary structure comprises 488 residues: Prostaglandin E2 receptor EP4 subtype (488 aa).

Over 1–19 the chain is Extracellular; sequence MSTPVANASASSMPELLNN. N-linked (GlcNAc...) asparagine glycosylation occurs at N7. Residues 20 to 43 form a helical membrane-spanning segment; sequence PVTIPAVMFIFGVVGNLVAIVVLC. Residues 44-55 are Cytoplasmic-facing; sequence KSRKEQKETTFY. A helical transmembrane segment spans residues 56–79; it reads TLVCGLAVTDLLGTLLVSPVTIAT. At 80-96 the chain is on the extracellular side; the sequence is YMKGQWPGGQALCDYST. An intrachain disulfide couples C92 to C170. The helical transmembrane segment at 97–115 threads the bilayer; it reads FILLFFGLSGLSIICAMSI. Residues 116 to 135 lie on the Cytoplasmic side of the membrane; sequence ERYLAINHAYFYSHYVDKRL. Residues 136-160 traverse the membrane as a helical segment; the sequence is AGLTLFAVYASNVLFCALPNMGLGR. Residues 161 to 184 are Extracellular-facing; it reads SRLQFPDTWCFIDWRTNVTAHAAF. N177 is a glycosylation site (N-linked (GlcNAc...) asparagine). The helical transmembrane segment at 185–211 threads the bilayer; it reads SYMYAGFSSFLILATVLCNVLVCGALL. At 212–270 the chain is on the cytoplasmic side; it reads RMHRQFMRRTSLGTEQHHAAAAAAVTSAACRGHPTASPALPRLSDFRRRRSFRRIAGAE. A helical membrane pass occupies residues 271–298; it reads IQMVILLIATSLVVLICSIPLVVRVFIN. The Extracellular portion of the chain corresponds to 299-315; the sequence is QLYQPDLVREISQNPDL. Residues 316–335 form a helical membrane-spanning segment; the sequence is QAIRIASVNPILDPWIYILL. Over 336–488 the chain is Cytoplasmic; that stretch reads RKTVLSKAIE…ETLNLSEKCI (153 aa). A compositionally biased stretch (basic and acidic residues) spans 358–371; the sequence is RRDRSGQHCSDSRR. A disordered region spans residues 358–381; it reads RRDRSGQHCSDSRRTSSAMSTHSR. Over residues 372–381 the composition is skewed to polar residues; sequence TSSAMSTHSR. A phosphoserine mark is found at S377, S380, S382, and S385. The tract at residues 456 to 475 is disordered; sequence EVGGGGRAGPTPKGSSLQVT.

The protein belongs to the G-protein coupled receptor 1 family. Interacts with FEM1A. Post-translationally, phosphorylation mediates agonist-mediated desensitization by promoting cytoplasmic retention. Highly expressed in intestine, duodenal epithelium, uterus, thymus and adrenal cortex. Lower but significant expression in whole adrenal, lung, spleen, stomach, and kidney. In this latter organ, the receptor is localized in the glomeruli and the transitional epithelium of the renal calyx.

It localises to the cell membrane. Functionally, receptor for prostaglandin E2 (PGE2). The activity of this receptor is mediated by G(s) proteins that stimulate adenylate cyclase. Has a relaxing effect on smooth muscle. May play an important role in regulating renal hemodynamics, intestinal epithelial transport, adrenal aldosterone secretion, and uterine function. This Oryctolagus cuniculus (Rabbit) protein is Prostaglandin E2 receptor EP4 subtype (PTGER4).